The primary structure comprises 423 residues: MKMPLTWGSWFLLSAWILNAGAEISITPEPAQPAEGDNVTLVVHGLSGELLAYNWYAGPSISLTFLVASYIVSTGDETPGPAHTGREAVRPDGSLDIHGALPGHTGTYILQTLNRQFQTEVGYGHMQVYEILAPPTVMANDTALVERRDTLRLICSSPSPAEVRWFFNGDALPVAVRLGLSPDGRMLTRHGVRREEAGAYQCEVWNPVSVSRSEPLNLTVYFGPERVAILQDSTTRTGCTIKVDFNTSLTLWCVSRSCPEPEYVWAFNGKALKNGQDHLNISSMSADHEGTYTCIAKNSKTLLSGSASVVVKLSAAAVAMMIVPVPTKPMEGQDVTLTVQGYPKDLLVYAWYRGPASEPNRLLSQLPSGNWIAGPAHTGREVGFANCSLLVQKLNLTDAGRYTLKTVTLQGKTDTLEVELQVA.

An N-terminal signal peptide occupies residues 1-22 (MKMPLTWGSWFLLSAWILNAGA). The N-linked (GlcNAc...) asparagine glycan is linked to Asn-38. Residues 77–96 (ETPGPAHTGREAVRPDGSLD) are disordered. Basic and acidic residues predominate over residues 84 to 95 (TGREAVRPDGSL). Ig-like C2-type domains are found at residues 134–219 (PPTV…LNLT) and 224–310 (PERV…ASVV). A disulfide bridge links Cys-155 with Cys-202. The N-linked (GlcNAc...) asparagine glycan is linked to Asn-217. A disulfide bridge links Cys-253 with Cys-294.

Belongs to the immunoglobulin superfamily. CEA family. Homooligomer; can for homodimers and homotetramers. Interacts with TECTA and TECTB.

The protein localises to the secreted. Functionally, required for proper hearing, plays a role in maintaining the integrity of the tectorial membrane. The polypeptide is Cell adhesion molecule CEACAM16 (Rattus norvegicus (Rat)).